A 138-amino-acid chain; its full sequence is RutC family protein UK114 (138 aa).

The protein belongs to the RutC family.

Its function is as follows. Molecular chaperone. Seems to fulfill an ATP-independent, HSP70-like function in protein folding. May protect essential factors of cell proliferation during heat shock. No role in calpain activation. In Drosophila melanogaster (Fruit fly), this protein is RutC family protein UK114.